The chain runs to 139 residues: Putative nickel-responsive regulator (139 aa).

The Ni(2+) site is built by His77, His88, His90, and Cys96.

The protein belongs to the transcriptional regulatory CopG/NikR family. It depends on Ni(2+) as a cofactor.

Transcriptional regulator. The chain is Putative nickel-responsive regulator from Haloarcula marismortui (strain ATCC 43049 / DSM 3752 / JCM 8966 / VKM B-1809) (Halobacterium marismortui).